Here is a 156-residue protein sequence, read N- to C-terminus: SsrA-binding protein (156 aa).

The tract at residues 134-156 is disordered; sequence RQTLREQQDKRESLRELRERNRR.

It belongs to the SmpB family.

It is found in the cytoplasm. In terms of biological role, required for rescue of stalled ribosomes mediated by trans-translation. Binds to transfer-messenger RNA (tmRNA), required for stable association of tmRNA with ribosomes. tmRNA and SmpB together mimic tRNA shape, replacing the anticodon stem-loop with SmpB. tmRNA is encoded by the ssrA gene; the 2 termini fold to resemble tRNA(Ala) and it encodes a 'tag peptide', a short internal open reading frame. During trans-translation Ala-aminoacylated tmRNA acts like a tRNA, entering the A-site of stalled ribosomes, displacing the stalled mRNA. The ribosome then switches to translate the ORF on the tmRNA; the nascent peptide is terminated with the 'tag peptide' encoded by the tmRNA and targeted for degradation. The ribosome is freed to recommence translation, which seems to be the essential function of trans-translation. The chain is SsrA-binding protein from Paenarthrobacter aurescens (strain TC1).